The primary structure comprises 266 residues: Interleukin-1 beta (266 aa).

The propeptide occupies M1–D113.

This sequence belongs to the IL-1 family. In terms of assembly, monomer. In its precursor form, weakly interacts with full-length MEFV; the mature cytokine does not interact at all. Interacts with integrins ITGAV:ITGBV and ITGA5:ITGB1; integrin-binding is required for IL1B signaling. Interacts with cargo receptor TMED10; the interaction is direct and is required for the secretion of IL1B mature form. Interacts with HSP90AB1; the interaction facilitates cargo translocation into the ERGIC. Interacts with HSP90B1; the interaction facilitates cargo translocation into the ERGIC.

The protein resides in the cytoplasm. The protein localises to the cytosol. It localises to the secreted. It is found in the lysosome. Its subcellular location is the extracellular exosome. Its function is as follows. Potent pro-inflammatory cytokine. Initially discovered as the major endogenous pyrogen, induces prostaglandin synthesis, neutrophil influx and activation, T-cell activation and cytokine production, B-cell activation and antibody production, and fibroblast proliferation and collagen production. Promotes Th17 differentiation of T-cells. Synergizes with IL12/interleukin-12 to induce IFNG synthesis from T-helper 1 (Th1) cells. Plays a role in angiogenesis by inducing VEGF production synergistically with TNF and IL6. Involved in transduction of inflammation downstream of pyroptosis: its mature form is specifically released in the extracellular milieu by passing through the gasdermin-D (GSDMD) pore. This chain is Interleukin-1 beta (IL1B), found in Capra hircus (Goat).